We begin with the raw amino-acid sequence, 523 residues long: 2-isopropylmalate synthase (523 aa).

One can recognise a Pyruvate carboxyltransferase domain in the interval 5–267 (VIIFDTTLRD…HTAINHQEIW (263 aa)). 4 residues coordinate Mn(2+): aspartate 14, histidine 202, histidine 204, and asparagine 238. Positions 392-523 (RLDYFSVQSG…QHNENNKETV (132 aa)) are regulatory domain.

The protein belongs to the alpha-IPM synthase/homocitrate synthase family. LeuA type 1 subfamily. As to quaternary structure, homodimer. The cofactor is Mn(2+).

It localises to the cytoplasm. The enzyme catalyses 3-methyl-2-oxobutanoate + acetyl-CoA + H2O = (2S)-2-isopropylmalate + CoA + H(+). The protein operates within amino-acid biosynthesis; L-leucine biosynthesis; L-leucine from 3-methyl-2-oxobutanoate: step 1/4. Functionally, catalyzes the condensation of the acetyl group of acetyl-CoA with 3-methyl-2-oxobutanoate (2-ketoisovalerate) to form 3-carboxy-3-hydroxy-4-methylpentanoate (2-isopropylmalate). This is 2-isopropylmalate synthase from Escherichia coli (strain K12 / MC4100 / BW2952).